The sequence spans 416 residues: Glutamyl-tRNA reductase (416 aa).

Substrate is bound by residues threonine 49–arginine 52, serine 105, glutamate 110–glutamine 112, and glutamine 116. Cysteine 50 functions as the Nucleophile in the catalytic mechanism. Glycine 185–isoleucine 190 lines the NADP(+) pocket.

The protein belongs to the glutamyl-tRNA reductase family. Homodimer.

The catalysed reaction is (S)-4-amino-5-oxopentanoate + tRNA(Glu) + NADP(+) = L-glutamyl-tRNA(Glu) + NADPH + H(+). It participates in porphyrin-containing compound metabolism; protoporphyrin-IX biosynthesis; 5-aminolevulinate from L-glutamyl-tRNA(Glu): step 1/2. In terms of biological role, catalyzes the NADPH-dependent reduction of glutamyl-tRNA(Glu) to glutamate 1-semialdehyde (GSA). This Shewanella denitrificans (strain OS217 / ATCC BAA-1090 / DSM 15013) protein is Glutamyl-tRNA reductase.